A 316-amino-acid chain; its full sequence is Remorin 4.1 (316 aa).

3 disordered regions span residues 1 to 108 (MLSE…PSEL), 125 to 202 (NANA…SVGQ), and 267 to 287 (AQNE…SAEA). Acidic residues predominate over residues 40–53 (EREEEVVVEEELEE). Residues 92-104 (RHTSIRSVGSDTA) show a composition bias toward polar residues. The span at 125 to 135 (NANAAAAAAAN) shows a compositional bias: low complexity. Composition is skewed to basic and acidic residues over residues 143-153 (GVDDALGRIGE) and 277-287 (KAEEKRASAEA). Residues 242 to 288 (VEKANAWLKKYERKLEEKRAKAMEKAQNEVAKARRKAEEKRASAEAK) adopt a coiled-coil conformation.

Belongs to the remorin family. As to quaternary structure, interacts with BAK1. Phosphorylated by BRI1. Phosphorylation reduces the binding affinity to BAK1. In terms of tissue distribution, expressed in roots, leaf blades and leaf sheaths. Expressed at low levels in stems and spikelets.

The protein localises to the cell membrane. Functions in abscisic acid (ABA) signaling downstream of BZIP23. Acts as antagonistic and negative regulator of brassinosteroid (BR) signaling. Binds to BAK1 and inhibits its interaction with the BR receptor BRI1. Inhibits the formation and subsequent activation of the BRI1-BAK1 receptor complex. The protein is Remorin 4.1 of Oryza sativa subsp. japonica (Rice).